The chain runs to 322 residues: Eukaryotic translation initiation factor 3 subunit I (322 aa).

WD repeat units follow at residues 4–43 (GHER…RLGT), 46–85 (GHQG…VIAS), 141–180 (MVES…KVVD), 184–223 (DHTA…CLKT), and 281–322 (GHFG…NIFE).

It belongs to the eIF-3 subunit I family. Component of the eukaryotic translation initiation factor 3 (eIF-3) complex. The eIF-3 complex interacts with pix.

The protein localises to the cytoplasm. Functionally, component of the eukaryotic translation initiation factor 3 (eIF-3) complex, which is involved in protein synthesis of a specialized repertoire of mRNAs and, together with other initiation factors, stimulates binding of mRNA and methionyl-tRNAi to the 40S ribosome. The eIF-3 complex specifically targets and initiates translation of a subset of mRNAs involved in cell proliferation. This chain is Eukaryotic translation initiation factor 3 subunit I, found in Drosophila virilis (Fruit fly).